A 285-amino-acid polypeptide reads, in one-letter code: Bifunctional protein FolD (285 aa).

NADP(+) is bound by residues 166 to 168 and isoleucine 232; that span reads GAS.

It belongs to the tetrahydrofolate dehydrogenase/cyclohydrolase family. In terms of assembly, homodimer.

The catalysed reaction is (6R)-5,10-methylene-5,6,7,8-tetrahydrofolate + NADP(+) = (6R)-5,10-methenyltetrahydrofolate + NADPH. It carries out the reaction (6R)-5,10-methenyltetrahydrofolate + H2O = (6R)-10-formyltetrahydrofolate + H(+). The protein operates within one-carbon metabolism; tetrahydrofolate interconversion. Its function is as follows. Catalyzes the oxidation of 5,10-methylenetetrahydrofolate to 5,10-methenyltetrahydrofolate and then the hydrolysis of 5,10-methenyltetrahydrofolate to 10-formyltetrahydrofolate. This is Bifunctional protein FolD from Pseudoalteromonas atlantica (strain T6c / ATCC BAA-1087).